The primary structure comprises 362 residues: Phosphoserine aminotransferase (362 aa).

Ser9 and Arg42 together coordinate L-glutamate. Pyridoxal 5'-phosphate contacts are provided by residues 76–77, Trp102, Thr153, Asp174, and Gln197; that span reads GR. Lys198 carries the post-translational modification N6-(pyridoxal phosphate)lysine. Position 239–240 (239–240) interacts with pyridoxal 5'-phosphate; that stretch reads NT.

The protein belongs to the class-V pyridoxal-phosphate-dependent aminotransferase family. SerC subfamily. As to quaternary structure, homodimer. Pyridoxal 5'-phosphate serves as cofactor.

The protein resides in the cytoplasm. It catalyses the reaction O-phospho-L-serine + 2-oxoglutarate = 3-phosphooxypyruvate + L-glutamate. The enzyme catalyses 4-(phosphooxy)-L-threonine + 2-oxoglutarate = (R)-3-hydroxy-2-oxo-4-phosphooxybutanoate + L-glutamate. Its pathway is amino-acid biosynthesis; L-serine biosynthesis; L-serine from 3-phospho-D-glycerate: step 2/3. It functions in the pathway cofactor biosynthesis; pyridoxine 5'-phosphate biosynthesis; pyridoxine 5'-phosphate from D-erythrose 4-phosphate: step 3/5. In terms of biological role, catalyzes the reversible conversion of 3-phosphohydroxypyruvate to phosphoserine and of 3-hydroxy-2-oxo-4-phosphonooxybutanoate to phosphohydroxythreonine. The protein is Phosphoserine aminotransferase of Escherichia coli O1:K1 / APEC.